Here is a 1576-residue protein sequence, read N- to C-terminus: Protein Shroom (1576 aa).

Disordered regions lie at residues 1–31 (MKMRNHKENGNGSEMGESTKSLAKMEPENNN), 46–100 (SNGA…TQAG), 112–142 (YDQTAFHHQKQPSYAQSEGYHSYVSSSDSTS), 187–244 (RQSH…SSTE), 267–434 (ISES…ISVT), 589–609 (VERQQQQQKEEQQLLRPHSQS), and 621–660 (PNNLSPIMVGLPTGSNSASTRDCSSPTPPPPPRRSGSLLP). Residues 10 to 21 (GNGSEMGESTKS) are compositionally biased toward polar residues. Composition is skewed to low complexity over residues 46 to 69 (SNGANSRSSNSNASFSSASVAGSV), 76 to 91 (HNSSSSQLGQQHGSSL), and 128 to 142 (SEGYHSYVSSSDSTS). A compositionally biased stretch (basic residues) spans 189 to 211 (SHSHSHSHAHSHSNSHGHSHGHA). Low complexity-rich tracts occupy residues 212 to 244 (HSASSSSSSNNNSNGSATNNNNNNSSESTSSTE) and 267 to 283 (ISESVSSSQRIVHSSRV). The span at 305-317 (DSSPTASNSSQMM) shows a compositional bias: polar residues. A compositionally biased stretch (low complexity) spans 376-388 (QSTLSTQSSLLEL). The span at 399–415 (MGQSHSMGDLQQKNPHQ) shows a compositional bias: polar residues. The residue at position 404 (serine 404) is a Phosphoserine. The interval 445–920 (APQPPAGKPS…LESNQQKRSN (476 aa)) is F-actin binding region required for planar polarity and cortical localization. The span at 633 to 643 (TGSNSASTRDC) shows a compositional bias: polar residues. A phosphoserine mark is found at serine 667 and serine 668. 7 disordered regions span residues 699-728 (ISFNDCGMPPPPPPPRGRLAVPTRRTSSAT), 743-823 (AALA…NCFA), 849-876 (VPKKPTSLQHKHLANGGGGSRKRPHHAT), 910-939 (NLESNQQKRSNSKASYLPRQSLEKLNNTDP), 1036-1055 (GYGKSSKPVTPQQYTRSQSY), 1091-1116 (PTATPTPTPTPTPTPPRLSPASSHSD), and 1210-1244 (SFANEPLMTPPLPPSPPPPLEPEEEEEQEENDVHD). Basic residues predominate over residues 748 to 759 (QQHHPQQHRHAQ). Over residues 798-816 (PLPPPPPPEVLQPRPPPSP) the composition is skewed to pro residues. Composition is skewed to polar residues over residues 910 to 923 (NLESNQQKRSNSKA) and 1042 to 1055 (KPVTPQQYTRSQSY). 2 stretches are compositionally biased toward pro residues: residues 1094–1108 (TPTPTPTPTPTPPRL) and 1217–1229 (MTPPLPPSPPPPL). The segment covering 1230-1239 (EPEEEEEQEE) has biased composition (acidic residues). A coiled-coil region spans residues 1232–1296 (EEEEEQEEND…LEAAREEHQT (65 aa)). Residues 1305 to 1572 (RQPIELDYEQ…QLSSLSDALV (268 aa)) form the ASD2 domain.

This sequence belongs to the shroom family. Monomer or homodimer. Interacts with Rok. In terms of assembly, binds (via N-terminus) to F-actin.

It is found in the cell junction. The protein localises to the adherens junction. It localises to the cytoplasm. The protein resides in the cytoskeleton. Its subcellular location is the apical cell membrane. In terms of biological role, binds to Rho-kinase Rok and targets it to the apical cell cortex where it mediates apical constriction. During embryogenic axis elongation, required for the localization to adherens junctions and the establishment of planar polarization of both Rho-kinase Rok and myosin regulatory light chain sqh. May be involved in the assembly of microtubule arrays during cell elongation. The protein is Protein Shroom of Drosophila melanogaster (Fruit fly).